The sequence spans 646 residues: MLKTLSKVSKNLSNTSAFLVKSKPLYISFCTCKAYFEDNTSLSRRFFSAKKSLQFKSLIRKYSEDSTLAWRDYENYNDDDLLYQRELSEIYNKCLKALHPFYPVFEVNSNLYYQLLMFTNYSNPKDNGFSKLLFSQYSDEKKVLVNFVYNVLRLDPDLQRQKRILESIISAALNICVSTVNLSRTDLKSSLKIILQTIDLFKYDSSFSSIYFRKDGPYHKVEKLLKSANIRSSLNSKTFNDFRTLFLLLIRDYSLFHGNSSHCMLANSMLPPSIAFSKMEKAEIFLRLRAFFQLMEHIDNERITPSEQFLDKVFISLLSAKNSCSLKMWLIHSFNKGWPVKIEFFVSFFKNFSNIVEGSMEVYSAYLHIIRDHYNLSDLADVQAIFLSRFILLRKKEDCKKLLEHVLPIRQLFLLNCYSLLNVLANYVVVFKDRLIFQEINQNWEEHKGQIPENFIFSLLKMFGEMQENQGFLNACIYYINKKKNLNEVSRYKINLLLLQGVNSFEVKDFYRKRGIEIMPKNLPRFFCYCLKKNKLSYALKYIRLSGLQFDYIVDCFRNSSDWTRTLISILSKKMGTEFAIRFLKIISFPLLSNDKVLREIEFFAIHEVNFRSLKWVADQQLRILPGWSSRPQKATFPLCTVHLKK.

As to quaternary structure, component of a complex, at least composed of cbp7 and cbp8.

It is found in the mitochondrion. Functionally, translation factor for cob1/cytochrome b; plays a role in cob1 mRNA stabilization and required for correct folding of the protein. The polypeptide is Cytochrome b translation regulator cbp8 (Schizosaccharomyces pombe (strain 972 / ATCC 24843) (Fission yeast)).